Reading from the N-terminus, the 325-residue chain is Biotin synthase (325 aa).

A Radical SAM core domain is found at 49–267; that stretch reads TQVQISTLLS…IAAARISMPR (219 aa). [4Fe-4S] cluster-binding residues include Cys-64, Cys-68, and Cys-71. Residues Cys-108, Cys-139, Cys-199, and Arg-271 each coordinate [2Fe-2S] cluster.

It belongs to the radical SAM superfamily. Biotin synthase family. As to quaternary structure, homodimer. The cofactor is [4Fe-4S] cluster. [2Fe-2S] cluster serves as cofactor.

It catalyses the reaction (4R,5S)-dethiobiotin + (sulfur carrier)-SH + 2 reduced [2Fe-2S]-[ferredoxin] + 2 S-adenosyl-L-methionine = (sulfur carrier)-H + biotin + 2 5'-deoxyadenosine + 2 L-methionine + 2 oxidized [2Fe-2S]-[ferredoxin]. Its pathway is cofactor biosynthesis; biotin biosynthesis; biotin from 7,8-diaminononanoate: step 2/2. Its function is as follows. Catalyzes the conversion of dethiobiotin (DTB) to biotin by the insertion of a sulfur atom into dethiobiotin via a radical-based mechanism. The protein is Biotin synthase of Acidiphilium cryptum (strain JF-5).